We begin with the raw amino-acid sequence, 397 residues long: Probable tRNA sulfurtransferase (397 aa).

The 106-residue stretch at 60–165 (HPVIEKLQEV…KEGTYITAYD (106 aa)) folds into the THUMP domain. Residues 183 to 184 (ML), 208 to 209 (HF), R265, G287, and Q296 contribute to the ATP site.

This sequence belongs to the ThiI family.

Its subcellular location is the cytoplasm. The catalysed reaction is [ThiI sulfur-carrier protein]-S-sulfanyl-L-cysteine + a uridine in tRNA + 2 reduced [2Fe-2S]-[ferredoxin] + ATP + H(+) = [ThiI sulfur-carrier protein]-L-cysteine + a 4-thiouridine in tRNA + 2 oxidized [2Fe-2S]-[ferredoxin] + AMP + diphosphate. It carries out the reaction [ThiS sulfur-carrier protein]-C-terminal Gly-Gly-AMP + S-sulfanyl-L-cysteinyl-[cysteine desulfurase] + AH2 = [ThiS sulfur-carrier protein]-C-terminal-Gly-aminoethanethioate + L-cysteinyl-[cysteine desulfurase] + A + AMP + 2 H(+). It functions in the pathway cofactor biosynthesis; thiamine diphosphate biosynthesis. Catalyzes the ATP-dependent transfer of a sulfur to tRNA to produce 4-thiouridine in position 8 of tRNAs, which functions as a near-UV photosensor. Also catalyzes the transfer of sulfur to the sulfur carrier protein ThiS, forming ThiS-thiocarboxylate. This is a step in the synthesis of thiazole, in the thiamine biosynthesis pathway. The sulfur is donated as persulfide by IscS. The protein is Probable tRNA sulfurtransferase of Anoxybacillus flavithermus (strain DSM 21510 / WK1).